A 613-amino-acid chain; its full sequence is MKGEPKTYSMSDLSYYGEKAQQQNEKQQKQYVVRRNSTQSTSKQNVSVVLEDNASESNELPKGFILYASLIALALSLFLAALDIMIVSTIIEEVAKQFGSYSEIGWLFTGYSLPNALLALIWGRIATPIGFKETMLFAIVIFEIGSLISALANSMSMLIGGRVIAGVGGCGIQSLSFVIGSTLVEESQRGILIAVLSCSFAIASVVGPFLGGVFTSSVTWRWCFYVNLPIGGLAFFLFLFFYNPGLSTFQETMDNIRKFPSQFIEIVRNVAYHLLKIKGFSKLNGWRKPFMELIFMYDIIEFVFCSAGFTCILLAFTFGGNRYAWNSASIIILFIIGIVLVVLAGIYDFLVFPKFNIVKATPHYQPLMSWTNIKKPGIFTVNIALFLTCAGYISQFTYIVQYFQLIYNDSAWRAAVHLVACIISTVVTAILCGAITDKTRQIKPIIVISSIFGVVGAGILTLLNNNANNSAHIGLLILPGVAFGGLAQSSMLASQIQLDKKSPTFRSDFVSITTFNTFCKNLGQALGGVISNTVFSAAAIKKLTKANIQLPDGTTVDNLVIYRQTNFDGSHSKLGNIISESLTDVFYMALGFYALSLIFAVFASNKKVTASLR.

Residues 1–38 form a disordered region; that stretch reads MKGEPKTYSMSDLSYYGEKAQQQNEKQQKQYVVRRNST. Residues 1–70 are Extracellular-facing; it reads MKGEPKTYSM…PKGFILYASL (70 aa). The chain crosses the membrane as a helical span at residues 71–91; the sequence is IALALSLFLAALDIMIVSTII. Topologically, residues 92 to 102 are cytoplasmic; it reads EEVAKQFGSYS. A helical transmembrane segment spans residues 103 to 123; sequence EIGWLFTGYSLPNALLALIWG. Topologically, residues 124–134 are extracellular; it reads RIATPIGFKET. Residues 135–155 traverse the membrane as a helical segment; sequence MLFAIVIFEIGSLISALANSM. The Cytoplasmic segment spans residues 156-163; sequence SMLIGGRV. A helical membrane pass occupies residues 164 to 184; it reads IAGVGGCGIQSLSFVIGSTLV. Residues 185–189 lie on the Extracellular side of the membrane; it reads EESQR. A helical membrane pass occupies residues 190–210; the sequence is GILIAVLSCSFAIASVVGPFL. The Cytoplasmic segment spans residues 211–221; it reads GGVFTSSVTWR. The chain crosses the membrane as a helical span at residues 222 to 242; it reads WCFYVNLPIGGLAFFLFLFFY. At 243–298 the chain is on the extracellular side; that stretch reads NPGLSTFQETMDNIRKFPSQFIEIVRNVAYHLLKIKGFSKLNGWRKPFMELIFMYD. A helical transmembrane segment spans residues 299–319; the sequence is IIEFVFCSAGFTCILLAFTFG. Residues 320 to 329 lie on the Cytoplasmic side of the membrane; that stretch reads GNRYAWNSAS. A helical transmembrane segment spans residues 330–350; that stretch reads IIILFIIGIVLVVLAGIYDFL. Residues 351–375 lie on the Extracellular side of the membrane; that stretch reads VFPKFNIVKATPHYQPLMSWTNIKK. Residues 376-396 form a helical membrane-spanning segment; it reads PGIFTVNIALFLTCAGYISQF. At 397–414 the chain is on the cytoplasmic side; sequence TYIVQYFQLIYNDSAWRA. Residues 415 to 435 form a helical membrane-spanning segment; the sequence is AVHLVACIISTVVTAILCGAI. The Extracellular portion of the chain corresponds to 436–443; that stretch reads TDKTRQIK. A helical transmembrane segment spans residues 444–464; it reads PIIVISSIFGVVGAGILTLLN. At 465–472 the chain is on the cytoplasmic side; the sequence is NNANNSAH. Residues 473 to 493 traverse the membrane as a helical segment; that stretch reads IGLLILPGVAFGGLAQSSMLA. Residues 494 to 581 lie on the Extracellular side of the membrane; the sequence is SQIQLDKKSP…SKLGNIISES (88 aa). A helical membrane pass occupies residues 582–602; the sequence is LTDVFYMALGFYALSLIFAVF. At 603–613 the chain is on the cytoplasmic side; it reads ASNKKVTASLR.

It belongs to the major facilitator superfamily.

It localises to the cell membrane. Functionally, transporter protein required for adaptation to high stress imposed by low-chain organic acids, in particular by acetic acid, and for resistance to azoles, especially to ketoconazole and fluconazole. The chain is Azole resistance protein 1 (AZR1) from Saccharomyces cerevisiae (strain ATCC 204508 / S288c) (Baker's yeast).